Here is a 364-residue protein sequence, read N- to C-terminus: 4-hydroxy-3-methylbut-2-en-1-yl diphosphate synthase (flavodoxin) (364 aa).

Residues C268, C271, C303, and E310 each coordinate [4Fe-4S] cluster.

It belongs to the IspG family. The cofactor is [4Fe-4S] cluster.

It catalyses the reaction (2E)-4-hydroxy-3-methylbut-2-enyl diphosphate + oxidized [flavodoxin] + H2O + 2 H(+) = 2-C-methyl-D-erythritol 2,4-cyclic diphosphate + reduced [flavodoxin]. It functions in the pathway isoprenoid biosynthesis; isopentenyl diphosphate biosynthesis via DXP pathway; isopentenyl diphosphate from 1-deoxy-D-xylulose 5-phosphate: step 5/6. Converts 2C-methyl-D-erythritol 2,4-cyclodiphosphate (ME-2,4cPP) into 1-hydroxy-2-methyl-2-(E)-butenyl 4-diphosphate. This is 4-hydroxy-3-methylbut-2-en-1-yl diphosphate synthase (flavodoxin) from Anoxybacillus flavithermus (strain DSM 21510 / WK1).